Consider the following 748-residue polypeptide: MIPAASSTPPGDALFPSVAPQDFWRSQVTGYSGSVTRHLSHRANNFKRHPKRRKCIRPSPPPPPNTPCPLELVDFGDLHPQRSFRELLFNGCILFGIEFSYAMETAYVTPVLLQMGLPDQLYSLVWFISPILGFLLQPLLGAWSDRCTSRFGRRRPFILVLAIGALLGLSLLLNGRDIGIALADVTGNHKWGLLLTVCGVVLMDFSADSADNPSHAYMMDVCSPADQDRGLNIHALLAGLGGGFGYVVGGIHWDKTGFGRALGGQLRVIYLFTAVTLSVTTVLTLVSIPERPLRPPSEKRAAMKSPSLPLPPSPPVLPEEGPGDSLPSHTATNFSSPISPPSPLTPKYGSFISRDSSLTGISEFASSFGTANIDSVLIDCFTGGHDSYLAIPGSVPRPPISVSFPRAPDGFYRQDRGLLEGREGALTSGCDGDILRVGSLDTSKPRSSGILKRPQTLAIPDAAGGGGPETSRRRNVTFSQQVANILLNGVKYESELTGSSERAEQPLSVGRLCSTICNMPKALRTLCVNHFLGWLSFEGMLLFYTDFMGEVVFQGDPKAPHTSEAYQKYNSGVTMGCWGMCIYAFSAAFYSAILEKLEEFLSVRTLYFIAYLAFGLGTGLATLSRNLYVVLSLCITYGILFSTLCTLPYSLLCDYYQSKKFAGSSADGTRRGMGVDISLLSCQYFLAQILVSLVLGPLTSAVGSANGVMYFSSLVSFLGCLYSSLFVIYEIPPSDAADEEHRPLLLNV.

Helical transmembrane passes span 93-113 (ILFG…PVLL), 123-143 (SLVW…LGAW), 155-175 (RPFI…LLNG), 191-211 (WGLL…DSAD), 233-253 (IHAL…GIHW), and 268-288 (VIYL…LVSI). Residues 294–339 (RPPSEKRAAMKSPSLPLPPSPPVLPEEGPGDSLPSHTATNFSSPIS) are disordered. A compositionally biased stretch (pro residues) spans 308–317 (LPLPPSPPVL). Threonine 497 carries the phosphothreonine modification. A run of 6 helical transmembrane segments spans residues 533 to 553 (GWLS…EVVF), 573 to 593 (VTMG…YSAI), 600 to 620 (FLSV…GTGL), 627 to 647 (LYVV…LCTL), 685 to 705 (FLAQ…VGSA), and 708 to 728 (VMYF…LFVI).

This sequence belongs to the glycoside-pentoside-hexuronide (GPH) cation symporter transporter (TC 2.A.2) family. As to expression, expressed in adult heart, brain, muscle and kidney, with very strong expression in brain. Also expressed in fetal brain, kidney and lung.

Its subcellular location is the membrane. The enzyme catalyses D-galactose(in) + H(+)(in) = D-galactose(out) + H(+)(out). It carries out the reaction D-glucose(out) + H(+)(out) = D-glucose(in) + H(+)(in). Proton-associated glucose transporter in the brain. The chain is Proton-associated sugar transporter A from Homo sapiens (Human).